We begin with the raw amino-acid sequence, 266 residues long: F-actin-capping protein subunit beta (266 aa).

This sequence belongs to the F-actin-capping protein beta subunit family. Component of the F-actin capping complex, composed of a heterodimer of an alpha and a beta subunit.

The protein resides in the cytoplasm. It localises to the cytoskeleton. Its subcellular location is the actin patch. In terms of biological role, F-actin-capping proteins bind in a Ca(2+)-independent manner to the fast growing ends of actin filaments (barbed end) thereby blocking the exchange of subunits at these ends. Unlike other capping proteins (such as gelsolin and severin), these proteins do not sever actin filaments. This is F-actin-capping protein subunit beta (cap2) from Emericella nidulans (strain FGSC A4 / ATCC 38163 / CBS 112.46 / NRRL 194 / M139) (Aspergillus nidulans).